The sequence spans 515 residues: 2,3-bisphosphoglycerate-independent phosphoglycerate mutase (515 aa).

Mn(2+) contacts are provided by aspartate 17 and serine 67. Catalysis depends on serine 67, which acts as the Phosphoserine intermediate. Substrate contacts are provided by residues histidine 128, 157-158 (RD), arginine 190, arginine 196, 262-265 (RADR), and lysine 336. Mn(2+) contacts are provided by aspartate 403, histidine 407, aspartate 444, histidine 445, and histidine 463.

It belongs to the BPG-independent phosphoglycerate mutase family. Monomer. The cofactor is Mn(2+).

The enzyme catalyses (2R)-2-phosphoglycerate = (2R)-3-phosphoglycerate. The protein operates within carbohydrate degradation; glycolysis; pyruvate from D-glyceraldehyde 3-phosphate: step 3/5. Catalyzes the interconversion of 2-phosphoglycerate and 3-phosphoglycerate. The protein is 2,3-bisphosphoglycerate-independent phosphoglycerate mutase of Acinetobacter baylyi (strain ATCC 33305 / BD413 / ADP1).